The chain runs to 615 residues: Ras association domain-containing protein 1 homolog (615 aa).

Disordered regions lie at residues 1 to 29 and 69 to 89; these read MLRS…PTYQ and SDDE…QSIG. Low complexity predominate over residues 76–87; that stretch reads TSSTSSPQSEQS. A Phorbol-ester/DAG-type zinc finger spans residues 164–214; the sequence is NHSFKTHSLLHPTWCDKCGDFIWGILKEALKCEHCNYTCHARCRDLVTLDC. Residues 249 to 268 form a disordered region; sequence PAMSSSTGSDKENGNGNSAG. Residues 251–268 show a composition bias toward polar residues; it reads MSSSTGSDKENGNGNSAG. One can recognise a Ras-associating domain in the interval 396 to 496; that stretch reads KTTSLRTITS…RALVLQENDT (101 aa). Positions 498-545 constitute an SARAH domain; the sequence is DILWDAFEIPELENFLRILGMEEKQYVFQTQQKYQQYRYHLDAELRQR.

In terms of assembly, interacts with rab-39 (GTP-bound form). Interacts (via SARAH domain) with cst-1; the interaction is required for the phosphorylation of cst-1. As to expression, expressed in the pharynx, epithelial cells, ciliated neurons in the head, body wall muscles, hypodermis, vulva, gonadal sheath cells, tail hypodermis and in coelomocytes. Expressed in the pharynx, neurons and vulva.

Its subcellular location is the cytoplasm. It is found in the cytoskeleton. Functionally, involved in embryonic morphogenesis. Plays a role in the organization of apical filamentous actin in epithelial cells of the developing embryo. May play a role in let-60-mediated vulval development. May induce nuclear condensation. Positively regulates the oxidative stress response, and this may be in association with the small GTPase rab-39. Not required for muscle integrity. This is Ras association domain-containing protein 1 homolog from Caenorhabditis elegans.